A 713-amino-acid polypeptide reads, in one-letter code: Polyribonucleotide nucleotidyltransferase (713 aa).

Residues Asp485 and Asp491 each coordinate Mg(2+). One can recognise a KH domain in the interval 552–611 (PRIHTIKINPEKIKDVIGKGGSVIRALTEETGTNIELDDDGTVRISAVANEAAMEAIRRI). The S1 motif domain maps to 621–689 (NRIYEGKVVR…RQGRVRLSIK (69 aa)).

Belongs to the polyribonucleotide nucleotidyltransferase family. In terms of assembly, component of the RNA degradosome, which is a multiprotein complex involved in RNA processing and mRNA degradation. Requires Mg(2+) as cofactor.

It is found in the cytoplasm. The catalysed reaction is RNA(n+1) + phosphate = RNA(n) + a ribonucleoside 5'-diphosphate. Involved in mRNA degradation. Catalyzes the phosphorolysis of single-stranded polyribonucleotides processively in the 3'- to 5'-direction. The polypeptide is Polyribonucleotide nucleotidyltransferase (Aeromonas salmonicida (strain A449)).